Here is a 474-residue protein sequence, read N- to C-terminus: uncharacterized protein (474 aa).

Residues 3 to 23 (LTLWLVLGAVGVGAVGTGVGF) traverse the membrane as a helical segment. Positions 171-296 (VSDGSSSKTR…KETKDRTKVD (126 aa)) are disordered. The segment covering 180–210 (RTPKKTKTSKKKPIKKKSSKSKSSKGSKKQK) has biased composition (basic residues). Residues 231–253 (TRSQSKQQKGQEQATDQTDSEGV) are compositionally biased toward polar residues. Acidic residues predominate over residues 257–266 (EGADNTDTEL). Positions 267-281 (VETTAETTEQEATTK) are enriched in low complexity. Residues 282–296 (STKDTKETKDRTKVD) are compositionally biased toward basic and acidic residues.

The protein localises to the membrane. This is an uncharacterized protein from Mycoplasma pneumoniae (strain ATCC 29342 / M129 / Subtype 1) (Mycoplasmoides pneumoniae).